The chain runs to 257 residues: NAD-capped RNA hydrolase NudC (257 aa).

Substrate contacts are provided by Lys-25 and Arg-69. Cys-98 and Cys-101 together coordinate Zn(2+). Glu-111 lines the substrate pocket. Zn(2+) is bound by residues Cys-116 and Cys-119. Tyr-124 serves as a coordination point for substrate. One can recognise a Nudix hydrolase domain in the interval 125 to 248 (PQIAPCIIVA…TVARRLIEDT (124 aa)). Positions 158, 174, and 178 each coordinate a divalent metal cation. Positions 159–180 (GFVEVGETLEQAVAREVMEESG) match the Nudix box motif. 192-199 (QPWPFPQS) lines the substrate pocket. A divalent metal cation is bound at residue Glu-219. Ala-241 is a binding site for substrate.

This sequence belongs to the Nudix hydrolase family. NudC subfamily. In terms of assembly, homodimer. Mg(2+) serves as cofactor. It depends on Mn(2+) as a cofactor. Zn(2+) is required as a cofactor.

It catalyses the reaction a 5'-end NAD(+)-phospho-ribonucleoside in mRNA + H2O = a 5'-end phospho-adenosine-phospho-ribonucleoside in mRNA + beta-nicotinamide D-ribonucleotide + 2 H(+). The enzyme catalyses NAD(+) + H2O = beta-nicotinamide D-ribonucleotide + AMP + 2 H(+). It carries out the reaction NADH + H2O = reduced beta-nicotinamide D-ribonucleotide + AMP + 2 H(+). MRNA decapping enzyme that specifically removes the nicotinamide adenine dinucleotide (NAD) cap from a subset of mRNAs by hydrolyzing the diphosphate linkage to produce nicotinamide mononucleotide (NMN) and 5' monophosphate mRNA. The NAD-cap is present at the 5'-end of some mRNAs and stabilizes RNA against 5'-processing. Has preference for mRNAs with a 5'-end purine. Catalyzes the hydrolysis of a broad range of dinucleotide pyrophosphates. The protein is NAD-capped RNA hydrolase NudC of Shigella flexneri serotype 5b (strain 8401).